A 397-amino-acid polypeptide reads, in one-letter code: Chorismate synthase (397 aa).

NADP(+) contacts are provided by arginine 40 and arginine 46. FMN is bound by residues 129–131, 257–258, glycine 302, 317–321, and arginine 343; these read RSS, QA, and KPISS.

Belongs to the chorismate synthase family. As to quaternary structure, homotetramer. The cofactor is FMNH2.

It carries out the reaction 5-O-(1-carboxyvinyl)-3-phosphoshikimate = chorismate + phosphate. It functions in the pathway metabolic intermediate biosynthesis; chorismate biosynthesis; chorismate from D-erythrose 4-phosphate and phosphoenolpyruvate: step 7/7. Its function is as follows. Catalyzes the anti-1,4-elimination of the C-3 phosphate and the C-6 proR hydrogen from 5-enolpyruvylshikimate-3-phosphate (EPSP) to yield chorismate, which is the branch point compound that serves as the starting substrate for the three terminal pathways of aromatic amino acid biosynthesis. This reaction introduces a second double bond into the aromatic ring system. This Chlorobium limicola (strain DSM 245 / NBRC 103803 / 6330) protein is Chorismate synthase.